The sequence spans 213 residues: Thiamine-phosphate synthase (213 aa).

Residues 39 to 43 (QLREK) and Asn-71 contribute to the 4-amino-2-methyl-5-(diphosphooxymethyl)pyrimidine site. 2 residues coordinate Mg(2+): Asp-72 and Asp-91. A 4-amino-2-methyl-5-(diphosphooxymethyl)pyrimidine-binding site is contributed by Ser-110. 136-138 (TGT) contacts 2-[(2R,5Z)-2-carboxy-4-methylthiazol-5(2H)-ylidene]ethyl phosphate. A 4-amino-2-methyl-5-(diphosphooxymethyl)pyrimidine-binding site is contributed by Lys-139. 2-[(2R,5Z)-2-carboxy-4-methylthiazol-5(2H)-ylidene]ethyl phosphate contacts are provided by residues Gly-166 and 186-187 (VS).

The protein belongs to the thiamine-phosphate synthase family. Requires Mg(2+) as cofactor.

The catalysed reaction is 2-[(2R,5Z)-2-carboxy-4-methylthiazol-5(2H)-ylidene]ethyl phosphate + 4-amino-2-methyl-5-(diphosphooxymethyl)pyrimidine + 2 H(+) = thiamine phosphate + CO2 + diphosphate. It carries out the reaction 2-(2-carboxy-4-methylthiazol-5-yl)ethyl phosphate + 4-amino-2-methyl-5-(diphosphooxymethyl)pyrimidine + 2 H(+) = thiamine phosphate + CO2 + diphosphate. It catalyses the reaction 4-methyl-5-(2-phosphooxyethyl)-thiazole + 4-amino-2-methyl-5-(diphosphooxymethyl)pyrimidine + H(+) = thiamine phosphate + diphosphate. It participates in cofactor biosynthesis; thiamine diphosphate biosynthesis; thiamine phosphate from 4-amino-2-methyl-5-diphosphomethylpyrimidine and 4-methyl-5-(2-phosphoethyl)-thiazole: step 1/1. In terms of biological role, condenses 4-methyl-5-(beta-hydroxyethyl)thiazole monophosphate (THZ-P) and 2-methyl-4-amino-5-hydroxymethyl pyrimidine pyrophosphate (HMP-PP) to form thiamine monophosphate (TMP). This chain is Thiamine-phosphate synthase, found in Clostridium botulinum (strain Eklund 17B / Type B).